Reading from the N-terminus, the 414-residue chain is Gamma-glutamyl phosphate reductase (414 aa).

Belongs to the gamma-glutamyl phosphate reductase family.

The protein resides in the cytoplasm. It carries out the reaction L-glutamate 5-semialdehyde + phosphate + NADP(+) = L-glutamyl 5-phosphate + NADPH + H(+). It participates in amino-acid biosynthesis; L-proline biosynthesis; L-glutamate 5-semialdehyde from L-glutamate: step 2/2. Functionally, catalyzes the NADPH-dependent reduction of L-glutamate 5-phosphate into L-glutamate 5-semialdehyde and phosphate. The product spontaneously undergoes cyclization to form 1-pyrroline-5-carboxylate. This is Gamma-glutamyl phosphate reductase from Thermoanaerobacter pseudethanolicus (strain ATCC 33223 / 39E) (Clostridium thermohydrosulfuricum).